A 1261-amino-acid chain; its full sequence is SNF2 domain-containing protein CLASSY 2 (1261 aa).

Residues 458–479 (FQKRTSRSSRSVAPKTEDSDEP) form a disordered region. The 201-residue stretch at 704 to 904 (DPTSGNIGGC…FNTLCLARPK (201 aa)) folds into the Helicase ATP-binding domain. 717-724 (HSPGAGKT) serves as a coordination point for ATP. The short motif at 855 to 858 (DEGH) is the DEAH box element. The region spanning 1067-1232 (FVLNLIFRVV…DPSLWQAEKI (166 aa)) is the Helicase C-terminal domain.

This sequence belongs to the helicase family. In terms of assembly, interacts with NRPD1 and SHH1.

The protein resides in the nucleus. Probable chromatin remodeling factor. The protein is SNF2 domain-containing protein CLASSY 2 (CLSY2) of Arabidopsis thaliana (Mouse-ear cress).